Reading from the N-terminus, the 466-residue chain is tRNA(Ile)-lysidine synthase (466 aa).

Position 26 to 31 (Ser-26 to Ser-31) interacts with ATP.

The protein belongs to the tRNA(Ile)-lysidine synthase family.

The protein localises to the cytoplasm. The catalysed reaction is cytidine(34) in tRNA(Ile2) + L-lysine + ATP = lysidine(34) in tRNA(Ile2) + AMP + diphosphate + H(+). Functionally, ligates lysine onto the cytidine present at position 34 of the AUA codon-specific tRNA(Ile) that contains the anticodon CAU, in an ATP-dependent manner. Cytidine is converted to lysidine, thus changing the amino acid specificity of the tRNA from methionine to isoleucine. The polypeptide is tRNA(Ile)-lysidine synthase (Oceanobacillus iheyensis (strain DSM 14371 / CIP 107618 / JCM 11309 / KCTC 3954 / HTE831)).